The chain runs to 104 residues: A-type ATP synthase subunit F (104 aa).

The protein belongs to the V-ATPase F subunit family. In terms of assembly, has multiple subunits with at least A(3), B(3), C, D, E, F, H, I and proteolipid K(x).

It localises to the cell membrane. Its function is as follows. Component of the A-type ATP synthase that produces ATP from ADP in the presence of a proton gradient across the membrane. This is A-type ATP synthase subunit F from Thermoplasma acidophilum (strain ATCC 25905 / DSM 1728 / JCM 9062 / NBRC 15155 / AMRC-C165).